The following is a 145-amino-acid chain: D-aminoacyl-tRNA deacylase (145 aa).

Residues 137–138 (GP) carry the Gly-cisPro motif, important for rejection of L-amino acids motif.

It belongs to the DTD family. Homodimer.

It is found in the cytoplasm. It carries out the reaction glycyl-tRNA(Ala) + H2O = tRNA(Ala) + glycine + H(+). The catalysed reaction is a D-aminoacyl-tRNA + H2O = a tRNA + a D-alpha-amino acid + H(+). Functionally, an aminoacyl-tRNA editing enzyme that deacylates mischarged D-aminoacyl-tRNAs. Also deacylates mischarged glycyl-tRNA(Ala), protecting cells against glycine mischarging by AlaRS. Acts via tRNA-based rather than protein-based catalysis; rejects L-amino acids rather than detecting D-amino acids in the active site. By recycling D-aminoacyl-tRNA to D-amino acids and free tRNA molecules, this enzyme counteracts the toxicity associated with the formation of D-aminoacyl-tRNA entities in vivo and helps enforce protein L-homochirality. The protein is D-aminoacyl-tRNA deacylase of Shewanella frigidimarina (strain NCIMB 400).